The primary structure comprises 451 residues: L-seryl-tRNA(Sec) selenium transferase (451 aa).

Residue Lys286 is modified to N6-(pyridoxal phosphate)lysine.

It belongs to the SelA family. Requires pyridoxal 5'-phosphate as cofactor.

The protein localises to the cytoplasm. It carries out the reaction L-seryl-tRNA(Sec) + selenophosphate + H(+) = L-selenocysteinyl-tRNA(Sec) + phosphate. It functions in the pathway aminoacyl-tRNA biosynthesis; selenocysteinyl-tRNA(Sec) biosynthesis; selenocysteinyl-tRNA(Sec) from L-seryl-tRNA(Sec) (bacterial route): step 1/1. Functionally, converts seryl-tRNA(Sec) to selenocysteinyl-tRNA(Sec) required for selenoprotein biosynthesis. This is L-seryl-tRNA(Sec) selenium transferase from Aliarcobacter butzleri (strain RM4018) (Arcobacter butzleri).